The chain runs to 74 residues: MAHPMQLGFQDAASPVMEELLHFHDHALMIVFLISTAVLYIIVVTVTTKLTDKYVLDAQEIEMVWTIMPAVVLI.

Topologically, residues 1–14 (MAHPMQLGFQDAAS) are mitochondrial intermembrane. Residues 15–45 (PVMEELLHFHDHALMIVFLISTAVLYIIVVT) form a helical membrane-spanning segment. The Mitochondrial matrix portion of the chain corresponds to 46-74 (VTTKLTDKYVLDAQEIEMVWTIMPAVVLI).

It belongs to the cytochrome c oxidase subunit 2 family. As to quaternary structure, component of the cytochrome c oxidase (complex IV, CIV), a multisubunit enzyme composed of 14 subunits. The complex is composed of a catalytic core of 3 subunits MT-CO1, MT-CO2 and MT-CO3, encoded in the mitochondrial DNA, and 11 supernumerary subunits COX4I, COX5A, COX5B, COX6A, COX6B, COX6C, COX7A, COX7B, COX7C, COX8 and NDUFA4, which are encoded in the nuclear genome. The complex exists as a monomer or a dimer and forms supercomplexes (SCs) in the inner mitochondrial membrane with NADH-ubiquinone oxidoreductase (complex I, CI) and ubiquinol-cytochrome c oxidoreductase (cytochrome b-c1 complex, complex III, CIII), resulting in different assemblies (supercomplex SCI(1)III(2)IV(1) and megacomplex MCI(2)III(2)IV(2)). Found in a complex with TMEM177, COA6, COX18, COX20, SCO1 and SCO2. Interacts with TMEM177 in a COX20-dependent manner. Interacts with COX20. Interacts with COX16. Cu cation is required as a cofactor.

It localises to the mitochondrion inner membrane. The enzyme catalyses 4 Fe(II)-[cytochrome c] + O2 + 8 H(+)(in) = 4 Fe(III)-[cytochrome c] + 2 H2O + 4 H(+)(out). Functionally, component of the cytochrome c oxidase, the last enzyme in the mitochondrial electron transport chain which drives oxidative phosphorylation. The respiratory chain contains 3 multisubunit complexes succinate dehydrogenase (complex II, CII), ubiquinol-cytochrome c oxidoreductase (cytochrome b-c1 complex, complex III, CIII) and cytochrome c oxidase (complex IV, CIV), that cooperate to transfer electrons derived from NADH and succinate to molecular oxygen, creating an electrochemical gradient over the inner membrane that drives transmembrane transport and the ATP synthase. Cytochrome c oxidase is the component of the respiratory chain that catalyzes the reduction of oxygen to water. Electrons originating from reduced cytochrome c in the intermembrane space (IMS) are transferred via the dinuclear copper A center (CU(A)) of subunit 2 and heme A of subunit 1 to the active site in subunit 1, a binuclear center (BNC) formed by heme A3 and copper B (CU(B)). The BNC reduces molecular oxygen to 2 water molecules using 4 electrons from cytochrome c in the IMS and 4 protons from the mitochondrial matrix. In Amia calva (Bowfin), this protein is Cytochrome c oxidase subunit 2 (mt-co2).